The following is a 208-amino-acid chain: High frequency lysogenization protein HflD homolog (208 aa).

The stretch at leucine 91–glutamate 125 forms a coiled coil.

It belongs to the HflD family.

The protein resides in the cytoplasm. It is found in the cell inner membrane. This is High frequency lysogenization protein HflD homolog from Serratia proteamaculans (strain 568).